A 907-amino-acid chain; its full sequence is Androgen receptor (907 aa).

Positions 1–545 (MEVQLGLGRV…PIDYYFPPQK (545 aa)) are modulating. The interval 1–574 (MEVQLGLGRV…GSCKVFFKRA (574 aa)) is interaction with ZNF318. Disordered stretches follow at residues 36 to 152 (NPGP…LSLL) and 200 to 231 (QQQE…YLGG). A compositionally biased stretch (low complexity) spans 55-76 (QQQQQQQQQQETSPRQQQQQQQ). Residue Ser67 is modified to Phosphoserine; by CDK9. A Phosphoserine modification is found at Ser81. Residues 123–134 (TSATGKGLQQQQ) show a composition bias toward polar residues. A compositionally biased stretch (low complexity) spans 200–224 (QQQEVVSEGSSSGRAREAAGASTSS). At Tyr228 the chain carries Phosphotyrosine; by CSK. At Ser261 the chain carries Phosphoserine. Tyr272 bears the Phosphotyrosine; by CSK and TNK2 mark. 4 positions are modified to phosphotyrosine; by CSK: Tyr310, Tyr349, Tyr360, and Tyr365. Tyr366 bears the Phosphotyrosine; by CSK and TNK2 mark. Lys389 is covalently cross-linked (Glycyl lysine isopeptide (Lys-Gly) (interchain with G-Cter in SUMO)). Tyr396 carries the post-translational modification Phosphotyrosine; by CSK. Residue Lys508 forms a Glycyl lysine isopeptide (Lys-Gly) (interchain with G-Cter in SUMO) linkage. Residues Tyr522 and Tyr539 each carry the phosphotyrosine; by CSK modification. The interval 539–906 (YYFPPQKTCL…GKVKPIYFHT (368 aa)) is interaction with LPXN. A DNA-binding region (nuclear receptor) is located at residues 546-619 (TCLICGDEAS…AGMTLGARKL (74 aa)). NR C4-type zinc fingers lie at residues 547 to 567 (CLIC…CGSC) and 583 to 607 (CASR…LRKC). The tract at residues 559–649 (YGALTCGSCK…TEEPTQKLTV (91 aa)) is interaction with HIPK3. The interaction with CCAR1 stretch occupies residues 579–906 (QKYLCASRND…GKVKPIYFHT (328 aa)). An interaction with KAT7 region spans residues 612–906 (MTLGARKLKK…GKVKPIYFHT (295 aa)). At Ser638 the chain carries Phosphoserine; by STK4/MST1. The 232-residue stretch at 656–887 (ECQPIFLNVL…DFPEMMAEII (232 aa)) folds into the NR LBD domain. 2 residues coordinate 17beta-hydroxy-5alpha-androstan-3-one: Asn693 and Arg740. Glycyl lysine isopeptide (Lys-Gly) (interchain with G-Cter in ubiquitin) cross-links involve residues Lys833 and Lys835. Thr865 is a 17beta-hydroxy-5alpha-androstan-3-one binding site. Position 903 is a phosphotyrosine; by CSK (Tyr903).

This sequence belongs to the nuclear hormone receptor family. NR3 subfamily. In terms of assembly, binds DNA as a homodimer. Part of a ternary complex containing AR, EFCAB6/DJBP and PARK7. Interacts with HIPK3 and NR0B2 in the presence of androgen. The ligand binding domain interacts with KAT7/HBO1 in the presence of dihydrotestosterone. Interacts with EFCAB6/DJBP, PQBP1, RANBP9, RBAK, SPDEF, SRA1, TGFB1I1 and RREB1. Interacts with ZMIZ1/ZIMP10 and ZMIZ2/ZMIP7 which both enhance its transactivation activity. Interacts with SLC30A9 and RAD54L2/ARIP4. Interacts with MACROD1 (via macro domain). Interacts via the ligand-binding domain with LXXLL and FXXLF motifs from NCOA1, NCOA2, NCOA3 and MAGEA11. Interacts (via nuclear receptor DNA binding domain and nuclear receptor ligand binding domain) with NCOA4. The AR N-terminal poly-Gln region binds Ran resulting in enhancement of AR-mediated transactivation. Ran-binding decreases as the poly-Gln length increases. Interacts with HIP1 (via coiled coil domain). Interacts (via ligand-binding domain) with TRIM68. Interacts with TNK2. Interacts with USP26. Interacts with RNF6. Interacts (regulated by RNF6 probably through polyubiquitination) with RNF14; regulates AR transcriptional activity. Interacts with PRMT2 and TRIM24. Interacts with RACK1. Interacts with RANBP10; this interaction enhances dihydrotestosterone-induced AR transcriptional activity. Interacts with PRPF6 in a hormone-independent way; this interaction enhances dihydrotestosterone-induced AR transcriptional activity. Interacts with STK4/MST1. Interacts with ZIPK/DAPK3. Interacts with LPXN. Interacts with MAK. Part of a complex containing AR, MAK and NCOA3. Interacts with CRY1. Interacts with CCAR1 and GATA2. Interacts with ZNF318. Interacts with BUD31. Interacts with ARID4A. Interacts with ARID4B. Interacts (via NR LBD domain) with ZBTB7A; the interaction is direct and androgen-dependent. Interacts with NCOR1. Interacts with NCOR2. Interacts witH CRY2 in a ligand-dependent manner. In terms of processing, phosphorylated in prostate cancer cells in response to several growth factors including EGF. Phosphorylation is induced by c-Src kinase (CSK). Tyr-522 is one of the major phosphorylation sites and an increase in phosphorylation and Src kinase activity is associated with prostate cancer progression. Phosphorylation by TNK2 enhances the DNA-binding and transcriptional activity. Phosphorylation at Ser-67 by CDK9 regulates AR promoter selectivity and cell growth. Sumoylated on Lys-389 (major) and Lys-508. Ubiquitinated. Deubiquitinated by USP26. 'Lys-6' and 'Lys-27'-linked polyubiquitination by RNF6 modulates AR transcriptional activity and specificity. Post-translationally, palmitoylated by ZDHHC7 and ZDHHC21. Palmitoylation is required for plasma membrane targeting and for rapid intracellular signaling via ERK and AKT kinases and cAMP generation.

Its subcellular location is the nucleus. It localises to the cytoplasm. Its function is as follows. Steroid hormone receptors are ligand-activated transcription factors that regulate eukaryotic gene expression and affect cellular proliferation and differentiation in target tissues. Transcription factor activity is modulated by bound coactivator and corepressor proteins like ZBTB7A that recruits NCOR1 and NCOR2 to the androgen response elements/ARE on target genes, negatively regulating androgen receptor signaling and androgen-induced cell proliferation. Transcription activation is also down-regulated by NR0B2. Activated, but not phosphorylated, by HIPK3 and ZIPK/DAPK3. This is Androgen receptor (AR) from Canis lupus familiaris (Dog).